Here is a 547-residue protein sequence, read N- to C-terminus: Cytochrome P450 monooxygenase 81 (547 aa).

The next 2 membrane-spanning stretches (helical) occupy residues 6–23 (IPTQLGIAGAVAVLLFLL) and 106–124 (AFFAMTYLLFGPGLLATAG). C483 provides a ligand contact to heme. N-linked (GlcNAc...) asparagine glycans are attached at residues N503 and N516.

Belongs to the cytochrome P450 family. Heme is required as a cofactor.

The protein localises to the membrane. It participates in secondary metabolite biosynthesis. Cytochrome P450 monooxygenase that is able to use dehydroabietic acid as a substrate for oxidation. This is Cytochrome P450 monooxygenase 81 from Postia placenta (strain ATCC 44394 / Madison 698-R) (Brown rot fungus).